A 294-amino-acid polypeptide reads, in one-letter code: MKIIAKGKVKDVYDDGDTLVFRFSNRISVFDKIIPTEIENKGESLCRTSSFWFRYIGERGIKNHFIEMIDNRTMRVRKYDVPEKVSPGSSGYVIPLEFITRHYVAGSLYDRLKAGSTKPADIGLNHFPDYGEKLPSPVFEVTTKREKTDRLLDIDEALEISGLTREEYAEIRETILKIDEMMEQEVGKRGLIHADGKKEVALGKEREPIIVDTFGTADEDRFWEKKEYDAGRIVELSKEMVRQYYRSTGYHDRLYEARSRGMPEPDIPPLPEDMARKVSDLYKTMYERITGQKW.

The protein belongs to the SAICAR synthetase family.

It catalyses the reaction 5-amino-1-(5-phospho-D-ribosyl)imidazole-4-carboxylate + L-aspartate + ATP = (2S)-2-[5-amino-1-(5-phospho-beta-D-ribosyl)imidazole-4-carboxamido]succinate + ADP + phosphate + 2 H(+). It participates in purine metabolism; IMP biosynthesis via de novo pathway; 5-amino-1-(5-phospho-D-ribosyl)imidazole-4-carboxamide from 5-amino-1-(5-phospho-D-ribosyl)imidazole-4-carboxylate: step 1/2. This is Phosphoribosylaminoimidazole-succinocarboxamide synthase from Thermoplasma acidophilum (strain ATCC 25905 / DSM 1728 / JCM 9062 / NBRC 15155 / AMRC-C165).